A 326-amino-acid polypeptide reads, in one-letter code: Malate dehydrogenase (326 aa).

11-17 (GAAGQIG) provides a ligand contact to NAD(+). The substrate site is built by arginine 92 and arginine 98. Residues asparagine 105, glutamine 112, and 129 to 131 (VGN) contribute to the NAD(+) site. Substrate contacts are provided by asparagine 131 and arginine 162. Histidine 187 acts as the Proton acceptor in catalysis.

The protein belongs to the LDH/MDH superfamily. MDH type 2 family.

It carries out the reaction (S)-malate + NAD(+) = oxaloacetate + NADH + H(+). Functionally, catalyzes the reversible oxidation of malate to oxaloacetate. This chain is Malate dehydrogenase, found in Halorhodospira halophila (strain DSM 244 / SL1) (Ectothiorhodospira halophila (strain DSM 244 / SL1)).